The sequence spans 570 residues: Putative diflavin flavoprotein A 6 (570 aa).

A zinc metallo-hydrolase region spans residues 38 to 231 (AKGTTANSYL…FPTRLYATGH (194 aa)). The region spanning 260-402 (VALIYASAYG…AGTDFAQALK (143 aa)) is the Flavodoxin-like domain. Positions 421 to 570 (VGRIVGSLCV…VHHRKSGNHY (150 aa)) are flavodoxin-reductase-like.

This sequence in the N-terminal section; belongs to the zinc metallo-hydrolase group 3 family. In the C-terminal section; belongs to the flavodoxin reductase family. Requires Fe cation as cofactor.

Its function is as follows. Mediates electron transfer from NADH to oxygen, reducing it to water. This modular protein has 3 redox cofactors, in other organisms the same activity requires 2 or 3 proteins. This Nostoc sp. (strain PCC 7120 / SAG 25.82 / UTEX 2576) protein is Putative diflavin flavoprotein A 6 (dfa6).